We begin with the raw amino-acid sequence, 504 residues long: Sodium-coupled neutral amino acid symporter 2 (504 aa).

The interval 1–23 (MKKTEMGRFNISPDEDSSSYSSN) is disordered. The Cytoplasmic portion of the chain corresponds to 1-76 (MKKTEMGRFN…HPGTTSFGMS (76 aa)). Residues 1 to 96 (MKKTEMGRFN…SGILGLSYAM (96 aa)) form a regulates protein turnover upon amino acid deprivation region. 4 positions are modified to phosphoserine: serine 12, serine 21, serine 22, and serine 55. The chain crosses the membrane as a helical span at residues 77–96 (VFNLSNAIVGSGILGLSYAM). A Na(+)-binding site is contributed by asparagine 82. The Extracellular segment spans residues 97-102 (ANTGIA). The helical transmembrane segment at 103–123 (LFIILLTFVSIFSLYSVHLLL) threads the bilayer. The Cytoplasmic segment spans residues 124–158 (KTANEGGSLLYEQLGHKAYGLAGKLAASGSITMQN). Residues 159–177 (IGAMSSYLFIVKYELPLVI) traverse the membrane as a helical segment. At 178–188 (KALMNIEDTNG) the chain is on the extracellular side. A helical transmembrane segment spans residues 189 to 209 (LWYLNGDYLVLLVSLVLILPL). Residues 210–217 (SLLRNLGY) are Cytoplasmic-facing. A helical transmembrane segment spans residues 218 to 238 (LGYTSGLSLLCMIFFLIVVIC). The Extracellular segment spans residues 239 to 289 (KKFQIPCPVEAALVANETVNGTFTQAALALAFNSTADDACRPRYFIFNSQT). A disulfide bridge links cysteine 245 with cysteine 278. Asparagine 254 and asparagine 258 each carry an N-linked (GlcNAc...) asparagine glycan. Residues 290–310 (VYAVPILTFSFVCHPAVLPIY) traverse the membrane as a helical segment. Over 311–326 (EELKSRSRRRMMNVSK) the chain is Cytoplasmic. The chain crosses the membrane as a helical span at residues 327 to 347 (ISFFAMFLMYLLAALFGYLTF). The Extracellular segment spans residues 348–368 (YGHVESELLHTYSEIVGTDIL). The chain crosses the membrane as a helical span at residues 369-389 (LLVVRLAVLVAVTLTVPVVIF). A Na(+)-binding site is contributed by threonine 383. The Cytoplasmic portion of the chain corresponds to 390 to 410 (PIRSSVTHLLCPTKEFSWLRH). The chain crosses the membrane as a helical span at residues 411–431 (SIITVTILSFTNLLVIFVPTI). Topologically, residues 432-433 (RD) are extracellular. A helical membrane pass occupies residues 434–454 (IFGFIGASAAAMLIFILPSAF). At 455–469 (YIKLVKKEPMRSVQK) the chain is on the cytoplasmic side. A helical membrane pass occupies residues 470 to 492 (IGALCFLLSGIVVMIGSMGLIVL). The Extracellular portion of the chain corresponds to 493-504 (DWVHDASAAGGH).

This sequence belongs to the amino acid/polyamine transporter 2 family. Post-translationally, polyubiquitination by NEDD4L regulates the degradation and the activity of SLC38A2. Expressed in cerebral and cerebellar astrocytes and neurons.

The protein localises to the cell membrane. The catalysed reaction is L-alanine(in) + Na(+)(in) = L-alanine(out) + Na(+)(out). It carries out the reaction glycine(in) + Na(+)(in) = glycine(out) + Na(+)(out). It catalyses the reaction L-serine(in) + Na(+)(in) = L-serine(out) + Na(+)(out). The enzyme catalyses L-proline(in) + Na(+)(in) = L-proline(out) + Na(+)(out). The catalysed reaction is L-methionine(in) + Na(+)(in) = L-methionine(out) + Na(+)(out). It carries out the reaction L-histidine(in) + Na(+)(in) = L-histidine(out) + Na(+)(out). It catalyses the reaction L-asparagine(in) + Na(+)(in) = L-asparagine(out) + Na(+)(out). The enzyme catalyses L-glutamine(in) + Na(+)(in) = L-glutamine(out) + Na(+)(out). The catalysed reaction is L-threonine(in) + Na(+)(in) = L-threonine(out) + Na(+)(out). It carries out the reaction L-leucine(in) + Na(+)(in) = L-leucine(out) + Na(+)(out). It catalyses the reaction L-phenylalanine(in) + Na(+)(in) = L-phenylalanine(out) + Na(+)(out). With respect to regulation, inhibited by N-methyl-D-glucamine. Inhibited by choline. Allosteric regulation of sodium ions binding by pH. Symporter that cotransports neutral amino acids and sodium ions from the extracellular to the intracellular side of the cell membrane. The transport is pH-sensitive, Li(+)-intolerant, electrogenic, driven by the Na(+) electrochemical gradient and cotransports of neutral amino acids and sodium ions with a stoichiometry of 1:1. May function in the transport of amino acids at the blood-brain barrier. May function in the transport of amino acids in the supply of maternal nutrients to the fetus through the placenta. Maintains a key metabolic glutamine/glutamate balance underpinning retrograde signaling by dendritic release of the neurotransmitter glutamate. Transports L-proline in differentiating osteoblasts for the efficient synthesis of proline-enriched proteins and provides proline essential for osteoblast differentiation and bone formation during bone development. The polypeptide is Sodium-coupled neutral amino acid symporter 2 (Mus musculus (Mouse)).